A 76-amino-acid polypeptide reads, in one-letter code: Liver-expressed antimicrobial peptide 2 (76 aa).

An N-terminal signal peptide occupies residues 1–22; it reads MLQLKLFAVLLTCLLLLGQVNS. A propeptide spanning residues 23-36 is cleaved from the precursor; sequence SPVPEVSSAKRSRR. 2 disulfide bridges follow: Cys53–Cys64 and Cys59–Cys69.

This sequence belongs to the LEAP2 family.

Its subcellular location is the secreted. Has an antimicrobial activity. This Mus musculus (Mouse) protein is Liver-expressed antimicrobial peptide 2 (Leap2).